The chain runs to 1811 residues: Protein virilizer homolog (1811 aa).

The residue at position 2 (alanine 2) is an N-acetylalanine. Residues 132 to 302 form a disordered region; the sequence is ISHDRDSPPP…EGDDGYEQIS (171 aa). Residues serine 133 and serine 138 each carry the phosphoserine modification. Positions 139-152 are enriched in pro residues; sequence PPPPPPPPPPPQPQ. Residues 160–169 show a composition bias toward basic and acidic residues; that stretch reads KHADGEKEDQ. Phosphoserine is present on serine 173. Pro residues predominate over residues 174-190; the sequence is PPRPQPRGPRTPPGPPP. A Phosphothreonine modification is found at threonine 184. Serine 222 carries the phosphoserine modification. Positions 224–233 are enriched in polar residues; sequence DRNSVPQEGQ. 2 stretches are compositionally biased toward acidic residues: residues 234 to 267 and 274 to 302; these read YSDE…DEDD and IPDD…EQIS. The residue at position 913 (tyrosine 913) is a Phosphotyrosine. A Phosphoserine modification is found at serine 1578. 2 disordered regions span residues 1615–1634 and 1662–1811; these read HVVP…GIRP and KEVV…SFTR. Over residues 1688–1697 the composition is skewed to gly residues; sequence GFSGNRGGRG. A Phosphothreonine modification is found at threonine 1707. Residue arginine 1722 is modified to Omega-N-methylarginine. The span at 1722-1747 shows a compositional bias: polar residues; it reads RGSSWSAQNTPRGNYNESRGGQSNFN. Arginine 1740 is subject to Asymmetric dimethylarginine; alternate. At arginine 1740 the chain carries Omega-N-methylarginine; alternate. Residues arginine 1772, arginine 1774, and arginine 1792 each carry the asymmetric dimethylarginine modification. The span at 1787-1801 shows a compositional bias: gly residues; that stretch reads GSGGSRGKFVSGGSG. The span at 1802–1811 shows a compositional bias: basic residues; sequence RGRHVRSFTR.

This sequence belongs to the vir family. In terms of assembly, component of the WMM complex, a N6-methyltransferase complex composed of a catalytic subcomplex, named MAC, and of an associated subcomplex, named MACOM. The MAC subcomplex is composed of METTL3 and METTL14. The MACOM subcomplex is composed of WTAP, ZC3H13, CBLL1/HAKAI, VIRMA, and, in some cases of RBM15 (RBM15 or RBM15B). Interacts with WTAP. Also a component of a MACOM-like complex, named WTAP complex, composed of WTAP, ZC3H13, CBLL1, VIRMA, RBM15, BCLAF1 and THRAP3. Interacts with NUDT21 and CPSF6.

The protein resides in the nucleus speckle. Its subcellular location is the nucleus. It localises to the nucleoplasm. The protein localises to the cytoplasm. Its function is as follows. Associated component of the WMM complex, a complex that mediates N6-methyladenosine (m6A) methylation of RNAs, a modification that plays a role in the efficiency of mRNA splicing and RNA processing. Acts as a key regulator of m6A methylation by promoting m6A methylation of mRNAs in the 3'-UTR near the stop codon: recruits the catalytic core components METTL3 and METTL14, thereby guiding m6A methylation at specific sites. Required for mRNA polyadenylation via its role in selective m6A methylation: m6A methylation of mRNAs in the 3'-UTR near the stop codon correlating with alternative polyadenylation (APA). In Mus musculus (Mouse), this protein is Protein virilizer homolog.